We begin with the raw amino-acid sequence, 455 residues long: Tyramine receptor Ser-2 (455 aa).

Residues 1-60 lie on the Extracellular side of the membrane; the sequence is MFRNYTDSVQEMVLRAIDSIRDSVINASSAVSTTTLPPLDIPMTSMKPPSIIPTVELVLG. N-linked (GlcNAc...) asparagine glycosylation is found at asparagine 4 and asparagine 26. A helical membrane pass occupies residues 61 to 83; sequence TITYLVIIAMTVVGNTLVVVAVF. Over 84 to 93 the chain is Cytoplasmic; the sequence is SYRPLKKVQN. A helical membrane pass occupies residues 94–115; it reads YFLVSLAASDLAVAIFVMPLHV. The Extracellular portion of the chain corresponds to 116 to 133; that stretch reads VTFLAGGKWLLGVTVCQF. Residues cysteine 131 and cysteine 209 are joined by a disulfide bond. Residues 134-154 traverse the membrane as a helical segment; it reads FTTADILLCTSSILNLCAIAL. At 155–174 the chain is on the cytoplasmic side; that stretch reads DRYWAIHNPINYAQKRTTKF. A helical transmembrane segment spans residues 175–197; that stretch reads VCIVIVIVWILSMLISVPPIIGW. At 198–221 the chain is on the extracellular side; the sequence is NNWQENMMEDSCGLSTEKAFVVFS. A helical transmembrane segment spans residues 222–243; it reads AAGSFFLPLLVMVVVYVKIFIS. The Cytoplasmic segment spans residues 244–370; sequence ARQRIRTNRG…VAKEKRAAKT (127 aa). A helical membrane pass occupies residues 371-392; it reads IAVIIFVFSFCWLPFFVAYVIR. The Extracellular portion of the chain corresponds to 393–407; the sequence is PFCETCKLHAKVEQA. A helical membrane pass occupies residues 408–428; sequence FTWLGYINSSLNPFLYGILNL. Over 429–455 the chain is Cytoplasmic; that stretch reads EFRRAFKKILCPKAVLEQRRRRMSAQP.

Belongs to the G-protein coupled receptor 1 family. In terms of tissue distribution, the different isoforms are expressed in specific, but overlapping sets of sensory, inter- and motor neurons, including AIY, AIZ and RIA interneurons. They are also expressed in pharyngeal cells, head muscles and excretory gland cells.

The protein localises to the cell membrane. Functionally, G-protein coupled receptor for tyramine, a known neurotransmitter and neuromodulator and direct precursor of octopamine. The rank order of potency is tyramine &gt; octopamine &gt; dopamine &gt; serotonin &gt; epinephrine = norepinephrine. In Caenorhabditis elegans, this protein is Tyramine receptor Ser-2 (ser-2).